Here is a 233-residue protein sequence, read N- to C-terminus: DNA-directed RNA polymerase I subunit RPA34 (233 aa).

Residues Ser10, Ser12, Ser14, and Ser60 each carry the phosphoserine modification. Positions 179–191 are enriched in basic and acidic residues; it reads DFHVAEEVKENKK. Residues 179–233 are disordered; sequence DFHVAEEVKENKKEPKKRSHHDDEEESSEKKKKKKEKREKREKKDKKDKKKKHRD. The segment covering 208–233 has biased composition (basic residues); it reads KKKKKKEKREKREKKDKKDKKKKHRD.

It belongs to the eukaryotic RPA34 RNA polymerase subunit family. In terms of assembly, component of the RNA polymerase I (Pol I) complex consisting of 14 subunits: RPA135, RPA190, RPC40, RPA14, RPB5, RPO26, RPA43, RPB8, RPA12, RPB10, RPC19, RPC10, RPA49 and RPA34. The complex is composed of a horseshoe-shaped core containing ten subunits (RPA135, RPA190, RPB5, RPO26, RPB8, RPB10, RPC10, RPA12, RPC19 and RPC40) where RPA135 and RPA190 form the DNA-binding cleft. Outside of the core, RPA14 and RPA43 form the stalk that mediates interactions with transcription initiation factors and newly synthesized RNA. Forms a TFIIF-like heterodimer with RPA49; the heterodimer formed by RPA34 and RPA49 can be dissociated from the Pol I core giving rise to a 12 subunit form A* of Pol I (formerly called pol A) that shows impaired transcript elongation activity and increased sensitivity to alpha-amanitin. The heterodimer formed by RPA34 and RPA49 stabilizes subunit RPA12 and stimulates RPA12-dependent RNA cleavage.

The protein resides in the nucleus. Its subcellular location is the nucleolus. DNA-dependent RNA polymerases catalyze the transcription of DNA into RNA using the four ribonucleoside triphosphates as substrates. Component of RNA polymerase I (Pol I) which synthesizes ribosomal RNA precursors. Besides, RNA polymerase I has intrinsic RNA cleavage activity. The heterodimer formed by RPA34 and RPA49 stimulates transcript elongation by Pol I. In Saccharomyces cerevisiae (strain ATCC 204508 / S288c) (Baker's yeast), this protein is DNA-directed RNA polymerase I subunit RPA34 (RPA34).